Reading from the N-terminus, the 382-residue chain is MYDLKIYSSYIVAAIKDKIVFFSTDGAVLHTITVEQKAPVKDTDAGNEPNGNQTQPTPANVVTFEYCPTAKVLAVSLSDKTWRRYQLREEDGGKLCSAPLGEDITTARTIVSMKFVPKHGVLFGTDKSDCFEFGALDKTSEPQPKWILGHMSQILALAVSDDERFIVTSDRDEKIKVSSYPDCHNIECFCLGHTEYVGGIEIIPSEKLISVSGDRTLRLWDVTEGKELSKLSLKEPALDFTVQKVAEGCGMLCAVRSYVQNMVEVALVSYDKPDASELYDPLTIDESLIILNAGLSASLRLMLLTMEKESKRVRMLVYEFCAEKRAFKACDDHPFVKNFEDQFKDVTIEQVRDYSTLFKHTIDNLTEYFERKKIKMESKKSK.

Residues Val-40 to Ala-59 form a disordered region. The segment covering Pro-49–Ala-59 has biased composition (polar residues). 2 WD repeats span residues Gly-149–Cys-190 and Gly-192–Lys-230.

Belongs to the WD repeat TRM82 family. As to quaternary structure, forms a heterodimer with the catalytic subunit.

It is found in the nucleus. Its pathway is tRNA modification; N(7)-methylguanine-tRNA biosynthesis. Required for the formation of N(7)-methylguanine at position 46 (m7G46) in tRNA. In the complex, it is required to stabilize and induce conformational changes of the catalytic subunit. This Anopheles gambiae (African malaria mosquito) protein is tRNA (guanine-N(7)-)-methyltransferase non-catalytic subunit wuho.